The sequence spans 687 residues: Homeobox-leucine zipper protein HDG12 (687 aa).

The tract at residues M1–Q32 is disordered. A compositionally biased stretch (basic and acidic residues) spans Q8–K17. Residues K18–P30 show a composition bias toward basic residues. The homeobox DNA-binding region spans K21–H80. Residues A87–K150 are a coiled coil. Residues S206–N440 enclose the START domain.

The protein belongs to the HD-ZIP homeobox family. Class IV subfamily. As to quaternary structure, interacts with BBM. As to expression, expressed in apical meristems and young epidermal tissue including trichomes and stipules. Expressed in lateral root tips, the L1 layer of apical inflorescence meristems and early flower primordia, carpel and stamen filament epidermis, stigma papillae, ovule primordia, nucellus and embryo.

It is found in the nucleus. Its function is as follows. Probable transcription factor that acts as a negative regulator of trichome branching in association with HDG11. Seems to promote cell differentiation. May regulate cell differentiation and proliferation during root and shoot meristem development. Acts as a positive regulator of SCL18/LAS expression. Involved, together with PDF2, in the regulation of flower organs development by promoting the expression of APETALA 3 (AP3) in the epidermis and internal cell layers of developing flowers. In Arabidopsis thaliana (Mouse-ear cress), this protein is Homeobox-leucine zipper protein HDG12.